The chain runs to 491 residues: Trigger factor (491 aa).

The region spanning 169-254 (GDRVTIDYLG…VKDVAAAAPI (86 aa)) is the PPIase FKBP-type domain. The disordered stretch occupies residues 433–491 (KTVSKDELMAEDEAEDKPAKKAPAKKKAAAKAEAGEGEEAAAPKKKAPAKKKAADDSAE). A compositionally biased stretch (basic residues) spans 452 to 461 (KKAPAKKKAA).

Belongs to the FKBP-type PPIase family. Tig subfamily.

The protein localises to the cytoplasm. It catalyses the reaction [protein]-peptidylproline (omega=180) = [protein]-peptidylproline (omega=0). Its function is as follows. Involved in protein export. Acts as a chaperone by maintaining the newly synthesized protein in an open conformation. Functions as a peptidyl-prolyl cis-trans isomerase. The sequence is that of Trigger factor from Sinorhizobium fredii (strain NBRC 101917 / NGR234).